Here is a 284-residue protein sequence, read N- to C-terminus: MLNKLILLLILSSCLVLSVKSEVNVDCSLVRCAQPICKPHYRLNMTDSCCGRCEPCTDVACTLQVKYCQDGEVPTGCCPCTLPPTKPDCSLVKCARPVCKPYYRLNMTDSCCGRCEPCTGVACTLQIKYCKDGEVPTGCCPCTPQPTKKPDCSKVPCPKILKYCQEGELPTGCCPCTPQPTKKPDCSRVPCPKILKYCKEGELPTGCCPCTPQPTKKPDCSDVMCTMDIRYCKNGELPTGCCPCTPQETKVPDCSKAMCTMDIKYCKPGEKPFGCCPCRENLTQ.

The first 25 residues, 1–25, serve as a signal peptide directing secretion; it reads MLNKLILLLILSSCLVLSVKSEVNV. Residues 25-64 form an A-1 repeat; sequence VDCSLVRCAQPICKPHYRLNMTDSCCGRCEPCTDVACTLQ. One copy of the B-1 repeat lies at 65 to 82; the sequence is VKYCQDGEVPTGCCPCTL. The A-2 repeat unit spans residues 88-126; it reads DCSLVKCARPVCKPYYRLNMTDSCCGRCEPCTGVACTLQ. Residues 127 to 144 form a B-2 repeat; that stretch reads IKYCKDGEVPTGCCPCTP. Residues 145-159 form a C-1 repeat; that stretch reads QPTKKPDCSKVPCPK. Residues 161–178 form a B-3 repeat; that stretch reads LKYCQEGELPTGCCPCTP. A C-2 repeat occupies 179-193; the sequence is QPTKKPDCSRVPCPK. A B-4 repeat occupies 195–212; it reads LKYCKEGELPTGCCPCTP. The C-3 repeat unit spans residues 213 to 228; the sequence is QPTKKPDCSDVMCTMD. Residues 229–246 form a B-5 repeat; it reads IRYCKNGELPTGCCPCTP. The C-4 repeat unit spans residues 247-262; that stretch reads QETKVPDCSKAMCTMD. A B-6 repeat occupies 263 to 278; sequence IKYCKPGEKPFGCCPC.

In Dictyostelium discoideum (Social amoeba), this protein is Prestalk D11 protein (ampA).